The primary structure comprises 299 residues: Acetylglutamate kinase (299 aa).

Residues 70–71, arginine 92, and asparagine 186 contribute to the substrate site; that span reads GG.

It belongs to the acetylglutamate kinase family. ArgB subfamily.

It is found in the cytoplasm. It carries out the reaction N-acetyl-L-glutamate + ATP = N-acetyl-L-glutamyl 5-phosphate + ADP. The protein operates within amino-acid biosynthesis; L-arginine biosynthesis; N(2)-acetyl-L-ornithine from L-glutamate: step 2/4. Catalyzes the ATP-dependent phosphorylation of N-acetyl-L-glutamate. This is Acetylglutamate kinase from Thermoanaerobacter pseudethanolicus (strain ATCC 33223 / 39E) (Clostridium thermohydrosulfuricum).